Consider the following 564-residue polypeptide: Phenylalanine--tRNA ligase beta subunit (564 aa).

The region spanning 286–362 (YFQNSLKINV…IGKGLDNFKS (77 aa)) is the B5 domain. Mg(2+)-binding residues include aspartate 340, aspartate 346, glutamate 349, and glutamate 350.

Belongs to the phenylalanyl-tRNA synthetase beta subunit family. Type 2 subfamily. Tetramer of two alpha and two beta subunits. The cofactor is Mg(2+).

It is found in the cytoplasm. It catalyses the reaction tRNA(Phe) + L-phenylalanine + ATP = L-phenylalanyl-tRNA(Phe) + AMP + diphosphate + H(+). The sequence is that of Phenylalanine--tRNA ligase beta subunit from Borrelia duttonii (strain Ly).